A 742-amino-acid polypeptide reads, in one-letter code: Dynein axonemal intermediate chain 4 (742 aa).

WD repeat units lie at residues 462–502 (HCEC…DFPV), 511–559 (KHTS…DCND), 631–671 (GHKG…PILT), and 674–713 (NTTN…IDPV).

In terms of assembly, part of the multisubunit axonemal dynein complex formed at least of two heavy chains and a number of intermediate and light chains. Associated with axonemal dynein subunits such as, DNAH2, DNAI3, and DYNLT1.

Its subcellular location is the cytoplasm. It is found in the cytoskeleton. The protein resides in the flagellum axoneme. It localises to the cilium axoneme. The protein localises to the dynein axonemal particle. In terms of biological role, plays a critical role in the assembly of axonemal dynein complex, thereby playing a role in ciliary motility. The sequence is that of Dynein axonemal intermediate chain 4 from Xenopus laevis (African clawed frog).